The primary structure comprises 141 residues: Hemoglobin subunit alpha (141 aa).

A Globin domain is found at 1-141 (VLSPADKKNV…VSTVLTSKYR (141 aa)). Ser-3 bears the Phosphoserine mark. 2 positions are modified to N6-succinyllysine: Lys-7 and Lys-11. Lys-16 carries the post-translational modification N6-acetyllysine; alternate. Position 16 is an N6-succinyllysine; alternate (Lys-16). Residue Tyr-24 is modified to Phosphotyrosine. Ser-35 is subject to Phosphoserine. At Lys-40 the chain carries N6-succinyllysine. Ser-49 is modified (phosphoserine). His-58 is an O2 binding site. His-87 is a heme b binding site. Ser-102 is subject to Phosphoserine. The residue at position 108 (Thr-108) is a Phosphothreonine. Phosphoserine is present on residues Ser-124 and Ser-131. Thr-134 and Thr-137 each carry phosphothreonine. Ser-138 carries the post-translational modification Phosphoserine.

This sequence belongs to the globin family. Heterotetramer of two alpha chains and two beta chains. As to expression, red blood cells.

Involved in oxygen transport from the lung to the various peripheral tissues. Functionally, hemopressin acts as an antagonist peptide of the cannabinoid receptor CNR1. Hemopressin-binding efficiently blocks cannabinoid receptor CNR1 and subsequent signaling. This chain is Hemoglobin subunit alpha (HBA), found in Spermophilus citellus (European ground squirrel).